A 533-amino-acid chain; its full sequence is Multicopper oxidase CueO (533 aa).

The segment at residues 1-28 (MHRRDFLKLTAALGAATSLPLWSRAALA) is a signal peptide (tat-type signal). 3 consecutive Plastocyanin-like domains span residues 53 to 166 (QTGS…IDDS), 221 to 290 (PYPQ…DTRD), and 416 to 532 (AFNF…FTVS). The Cu cation site is built by His102, His104, His142, and His144. Cu cation contacts are provided by His458, His461, His463, His514, Cys515, His516, and His520.

Belongs to the multicopper oxidase family. As to quaternary structure, monomer. Cu cation is required as a cofactor. Predicted to be exported by the Tat system. The position of the signal peptide cleavage has not been experimentally proven.

The protein resides in the periplasm. The enzyme catalyses 4 Cu(+) + O2 + 4 H(+) = 4 Cu(2+) + 2 H2O. In terms of biological role, multicopper oxidase involved in copper homeostasis and copper tolerance under aerobic conditions. Is responsible for the oxidation of Cu(+) to the less harmful Cu(2+) in the periplasm, thereby preventing Cu(+) from entering the cytoplasm. This chain is Multicopper oxidase CueO (cueO), found in Yersinia pestis.